We begin with the raw amino-acid sequence, 373 residues long: GTPase-activating protein gyp10 (373 aa).

One can recognise a Rab-GAP TBC domain in the interval 35–220 (FLMKSLRKSV…RLFDFFISSH (186 aa)). The chain crosses the membrane as a helical span at residues 343-363 (IFNGCNMLAAITVIGIGIVAS).

It localises to the endoplasmic reticulum membrane. In terms of biological role, has a role in vesicular trafficking and septation during cytokinesis. This is GTPase-activating protein gyp10 (gyp10) from Schizosaccharomyces pombe (strain 972 / ATCC 24843) (Fission yeast).